The chain runs to 28 residues: HSDAVFTDNYSRIRKQMAVKKYINSLLA.

Position 28 is an alanine amide (Ala-28).

The protein belongs to the glucagon family.

It localises to the secreted. Functionally, VIP is a neuropeptide involved in a diverse array of physiological processes through activating the PACAP subfamily of class B1 G protein-coupled receptors: VIP receptor 1 (VPR1) and VIP receptor 2 (VPR2). Abundantly expressed throughout the CNS and peripheral nervous systems where they primarily exert neuroprotective and immune modulatory roles. Also causes vasodilation, lowers arterial blood pressure, stimulates myocardial contractility, increases glycogenolysis and relaxes the smooth muscle of trachea, stomach and gall bladder. The chain is Vasoactive intestinal peptide (vip) from Scyliorhinus canicula (Small-spotted catshark).